We begin with the raw amino-acid sequence, 420 residues long: Glutamate dehydrogenase (420 aa).

K105 is a catalytic residue. 220–226 is a binding site for NAD(+); the sequence is GYGNAGY.

This sequence belongs to the Glu/Leu/Phe/Val dehydrogenases family. Homohexamer.

It localises to the cytoplasm. It carries out the reaction L-glutamate + NAD(+) + H2O = 2-oxoglutarate + NH4(+) + NADH + H(+). The catalysed reaction is L-glutamate + NADP(+) + H2O = 2-oxoglutarate + NH4(+) + NADPH + H(+). The protein is Glutamate dehydrogenase (gdhA) of Pyrococcus furiosus (strain ATCC 43587 / DSM 3638 / JCM 8422 / Vc1).